We begin with the raw amino-acid sequence, 901 residues long: HTH-type transcriptional regulator MalT (901 aa).

Residue 39–46 (SPAGYGKT) participates in ATP binding. One can recognise an HTH luxR-type domain in the interval 829-894 (ELIRTSPLTQ…DAVQHAQQLL (66 aa)). A DNA-binding region (H-T-H motif) is located at residues 853–872 (NEQIAGELAVAATTIKTHIR).

It belongs to the MalT family. In terms of assembly, monomer in solution. Oligomerizes to an active state in the presence of the positive effectors ATP and maltotriose.

Its activity is regulated as follows. Activated by ATP and maltotriose, which are both required for DNA binding. Its function is as follows. Positively regulates the transcription of the maltose regulon whose gene products are responsible for uptake and catabolism of malto-oligosaccharides. Specifically binds to the promoter region of its target genes, recognizing a short DNA motif called the MalT box. The sequence is that of HTH-type transcriptional regulator MalT from Salmonella heidelberg (strain SL476).